A 239-amino-acid polypeptide reads, in one-letter code: uncharacterized protein (239 aa).

The tract at residues 129-155 is disordered; it reads DSLDDEDDNMISSNDPTKSPEEHDTTT. A Phosphoserine modification is found at Ser-160.

This is an uncharacterized protein from Schizosaccharomyces pombe (strain 972 / ATCC 24843) (Fission yeast).